A 320-amino-acid polypeptide reads, in one-letter code: o-succinylbenzoate synthase (320 aa).

Catalysis depends on Lys-133, which acts as the Proton donor. Mg(2+) contacts are provided by Asp-161, Glu-190, and Asp-213. The active-site Proton acceptor is Lys-235.

This sequence belongs to the mandelate racemase/muconate lactonizing enzyme family. MenC type 1 subfamily. A divalent metal cation serves as cofactor.

It catalyses the reaction (1R,6R)-6-hydroxy-2-succinyl-cyclohexa-2,4-diene-1-carboxylate = 2-succinylbenzoate + H2O. Its pathway is quinol/quinone metabolism; 1,4-dihydroxy-2-naphthoate biosynthesis; 1,4-dihydroxy-2-naphthoate from chorismate: step 4/7. It participates in quinol/quinone metabolism; menaquinone biosynthesis. Converts 2-succinyl-6-hydroxy-2,4-cyclohexadiene-1-carboxylate (SHCHC) to 2-succinylbenzoate (OSB). This Escherichia coli O7:K1 (strain IAI39 / ExPEC) protein is o-succinylbenzoate synthase.